A 90-amino-acid polypeptide reads, in one-letter code: Small ribosomal subunit protein uS15c (90 aa).

This sequence belongs to the universal ribosomal protein uS15 family. In terms of assembly, part of the 30S ribosomal subunit.

The protein resides in the plastid. It localises to the chloroplast. This Morus indica (Mulberry) protein is Small ribosomal subunit protein uS15c (rps15).